The primary structure comprises 350 residues: MKKSGWLVVALIALVVLGVVTSIAVNVYFKDKLVQGITVQMEDEGGKPISANLIINELTDEGPKKIWSGSGPGIVATSLILPKEEVNTFEINGEKIRVYRSINLEVIAYTEGKMGVAIFSVDPARPEHKSVKIVLRDVPKTKSEPTPGVWTTYEFTPVLKFATWDDIFAKYGYPRGAKIRIESKTRPYGSPTWVSGYTEVTLDSGLFSPYLSGKNKYTVYFQIKYVYAITELEMGEEKIYYERVYAVDTNTDPVAGYRDYVSWHGNLPANYDEYYITPAGDTREIAITGGHDYAFSVSVGFSYPAGITVALGVTKVPSPPATLSVTSTRSDGWVKTAGFNGFIESYSNWI.

A signal peptide spans 1 to 26 (MKKSGWLVVALIALVVLGVVTSIAVN).

This is an uncharacterized protein from Archaeoglobus fulgidus (strain ATCC 49558 / DSM 4304 / JCM 9628 / NBRC 100126 / VC-16).